A 484-amino-acid polypeptide reads, in one-letter code: Glutamyl-tRNA(Gln) amidotransferase subunit A (484 aa).

Residues K74 and S149 each act as charge relay system in the active site. S173 functions as the Acyl-ester intermediate in the catalytic mechanism.

The protein belongs to the amidase family. GatA subfamily. Heterotrimer of A, B and C subunits.

It carries out the reaction L-glutamyl-tRNA(Gln) + L-glutamine + ATP + H2O = L-glutaminyl-tRNA(Gln) + L-glutamate + ADP + phosphate + H(+). Its function is as follows. Allows the formation of correctly charged Gln-tRNA(Gln) through the transamidation of misacylated Glu-tRNA(Gln) in organisms which lack glutaminyl-tRNA synthetase. The reaction takes place in the presence of glutamine and ATP through an activated gamma-phospho-Glu-tRNA(Gln). The polypeptide is Glutamyl-tRNA(Gln) amidotransferase subunit A (Prochlorococcus marinus subsp. pastoris (strain CCMP1986 / NIES-2087 / MED4)).